Reading from the N-terminus, the 1113-residue chain is uncharacterized protein (1113 aa).

313-320 (GPPGTGKS) contributes to the ATP binding site.

This sequence belongs to the DNA2/NAM7 helicase family.

This is an uncharacterized protein from Mycoplasma genitalium (strain ATCC 33530 / DSM 19775 / NCTC 10195 / G37) (Mycoplasmoides genitalium).